The chain runs to 208 residues: Guanylate kinase (208 aa).

The Guanylate kinase-like domain occupies glycine 4–arginine 184. An ATP-binding site is contributed by alanine 11 to serine 18.

Belongs to the guanylate kinase family.

The protein localises to the cytoplasm. The enzyme catalyses GMP + ATP = GDP + ADP. Essential for recycling GMP and indirectly, cGMP. The protein is Guanylate kinase of Photobacterium profundum (strain SS9).